Here is a 594-residue protein sequence, read N- to C-terminus: Jacalin-related lectin 44 (594 aa).

A disordered region spans residues 1 to 23; that stretch reads MIQKLGAKGIKSDERNQREWDDG. 4 consecutive Jacalin-type lectin domains span residues 2–148, 151–293, 296–441, and 448–588; these read IQKL…YFIS, PTRL…YFST, PNKL…YYRP, and VKRL…HVIP. Residues 10-23 are compositionally biased toward basic and acidic residues; sequence IKSDERNQREWDDG.

This sequence belongs to the jacalin lectin family.

This is Jacalin-related lectin 44 (JAL44) from Arabidopsis thaliana (Mouse-ear cress).